The chain runs to 209 residues: NADH-quinone oxidoreductase subunit C (209 aa).

The protein belongs to the complex I 30 kDa subunit family. As to quaternary structure, NDH-1 is composed of 14 different subunits. Subunits NuoB, C, D, E, F, and G constitute the peripheral sector of the complex.

The protein resides in the cell inner membrane. It catalyses the reaction a quinone + NADH + 5 H(+)(in) = a quinol + NAD(+) + 4 H(+)(out). Its function is as follows. NDH-1 shuttles electrons from NADH, via FMN and iron-sulfur (Fe-S) centers, to quinones in the respiratory chain. The immediate electron acceptor for the enzyme in this species is believed to be ubiquinone. Couples the redox reaction to proton translocation (for every two electrons transferred, four hydrogen ions are translocated across the cytoplasmic membrane), and thus conserves the redox energy in a proton gradient. This is NADH-quinone oxidoreductase subunit C from Bordetella petrii (strain ATCC BAA-461 / DSM 12804 / CCUG 43448).